A 339-amino-acid polypeptide reads, in one-letter code: Ketol-acid reductoisomerase (NADP(+)) (339 aa).

The 182-residue stretch at 1–182 (MRVYYDRDAD…GGGRSGVIET (182 aa)) folds into the KARI N-terminal Rossmann domain. Residues 24–27 (YGSQ), Arg48, Ser51, Thr53, and 83–86 (DELQ) contribute to the NADP(+) site. Residue His108 is part of the active site. Residue Gly134 participates in NADP(+) binding. Positions 183 to 328 (TFKEECETDL…GKLRAMMPWI (146 aa)) constitute a KARI C-terminal knotted domain. Mg(2+) is bound by residues Asp191, Glu195, Glu227, and Glu231. Ser252 contacts substrate.

It belongs to the ketol-acid reductoisomerase family. Requires Mg(2+) as cofactor.

The catalysed reaction is (2R)-2,3-dihydroxy-3-methylbutanoate + NADP(+) = (2S)-2-acetolactate + NADPH + H(+). The enzyme catalyses (2R,3R)-2,3-dihydroxy-3-methylpentanoate + NADP(+) = (S)-2-ethyl-2-hydroxy-3-oxobutanoate + NADPH + H(+). It participates in amino-acid biosynthesis; L-isoleucine biosynthesis; L-isoleucine from 2-oxobutanoate: step 2/4. The protein operates within amino-acid biosynthesis; L-valine biosynthesis; L-valine from pyruvate: step 2/4. Its function is as follows. Involved in the biosynthesis of branched-chain amino acids (BCAA). Catalyzes an alkyl-migration followed by a ketol-acid reduction of (S)-2-acetolactate (S2AL) to yield (R)-2,3-dihydroxy-isovalerate. In the isomerase reaction, S2AL is rearranged via a Mg-dependent methyl migration to produce 3-hydroxy-3-methyl-2-ketobutyrate (HMKB). In the reductase reaction, this 2-ketoacid undergoes a metal-dependent reduction by NADPH to yield (R)-2,3-dihydroxy-isovalerate. This chain is Ketol-acid reductoisomerase (NADP(+)), found in Brucella abortus (strain S19).